We begin with the raw amino-acid sequence, 73 residues long: Protein SlyX homolog (73 aa).

Belongs to the SlyX family.

The sequence is that of Protein SlyX homolog from Histophilus somni (strain 2336) (Haemophilus somnus).